Here is a 35-residue protein sequence, read N- to C-terminus: Conotoxin TxMEKL-0422 (35 aa).

Residues 1-35 (NPASCCSCADVDPGRASRKTPKGEDQVFIKEKDRC) form a disordered region. The span at 21-35 (PKGEDQVFIKEKDRC) shows a compositional bias: basic and acidic residues.

Contains disulfide bonds. As to expression, expressed by the venom duct.

It is found in the secreted. The chain is Conotoxin TxMEKL-0422 from Conus textile (Cloth-of-gold cone).